We begin with the raw amino-acid sequence, 244 residues long: MKYVLDVHTHTVASGHAYTTLLENAKYASEIGLKVLGTTEHGPKMPHAPHIWYFYNYKVLPRKIYGVTMLHGCEVNVVDYKGNLDLPEDIVKDLDIVIASLHEPCVTPGTIEENTAAILNVMDNPYVDIIGHPGNPAYPINAEEVVKKAKEKNILIEINNSSFKTSRIGSVPNCTEIVKLCKKHGVNIILGSDSHVCFTIGNFDKIQEILDSIDMPKELIINTDEKKLLTYLKSKGKLKDLVID.

His8, His10, His16, His41, Glu74, His102, His132, Asp193, and His195 together coordinate Zn(2+).

It belongs to the PHP family. It depends on Zn(2+) as a cofactor.

The protein is Probable phosphatase NT01CX_1282 of Clostridium novyi (strain NT).